We begin with the raw amino-acid sequence, 705 residues long: Dolichyl-diphosphooligosaccharide--protein glycosyltransferase subunit STT3A (705 aa).

At 1–15 (MTKLGFLRLSYEKQD) the chain is on the cytoplasmic side. Residues 16 to 34 (TLLKLLILSMAAVLSFSTR) traverse the membrane as a helical segment. The Lumenal segment spans residues 35 to 111 (LFAVLRFESV…VLHFFHITID (77 aa)). A DXD motif 1 motif is present at residues 47 to 49 (EFD). A Mn(2+)-binding site is contributed by aspartate 49. Residues 112-141 (IRNVCVFLAPLFSSFTTIVTYHLTKELKDA) form a helical membrane-spanning segment. Residue glycine 142 is a topological domain, cytoplasmic. The helical transmembrane segment at 143–158 (AGLLAAAMIAVVPGYI) threads the bilayer. Topologically, residues 159–170 (SRSVAGSYDNEG) are lumenal. Residues aspartate 167 and glutamate 169 each coordinate Mn(2+). The DXD motif 2 motif lies at 167–169 (DNE). The helical transmembrane segment at 171 to 188 (IAIFCMLLTYYMWIKAVK) threads the bilayer. At 189-191 (TGS) the chain is on the cytoplasmic side. Residues 192–207 (IYWAAKCALAYFYMVS) traverse the membrane as a helical segment. Over 208 to 210 (SWG) the chain is Lumenal. Residues 211 to 229 (GYVFLINLIPLHVLVLMLT) form a helical membrane-spanning segment. At 230–234 (GRFSH) the chain is on the cytoplasmic side. Residues 235-253 (RIYVAYCTVYCLGTILSMQ) traverse the membrane as a helical segment. The Lumenal portion of the chain corresponds to 254–265 (ISFVGFQPVLSS). A helical membrane pass occupies residues 266–283 (EHMAAFGVFGLCQIHAFV). Residues 284-298 (DYLRSKLNPQQFEVL) lie on the Cytoplasmic side of the membrane. Residues 299 to 317 (FRSVISLVGFVLLTVGALL) traverse the membrane as a helical segment. At 318-356 (MLTGKISPWTGRFYSLLDPSYAKNNIPIIASVSEHQPTT) the chain is on the lumenal side. Residues 348-351 (SVSE) carry the SVSE motif motif. Residues 357–379 (WSSYYFDLQLLVFMFPVGLYYCF) traverse the membrane as a helical segment. The Cytoplasmic portion of the chain corresponds to 380–385 (SNLSDA). Residues 386–402 (RIFIIMYGVTSMYFSAV) form a helical membrane-spanning segment. The Lumenal segment spans residues 403–406 (MVRL). Arginine 405 lines the dolichyl diphosphooligosaccharide pocket. A helical transmembrane segment spans residues 407–428 (MLVLAPVMCILSGIGVSQVLST). Over 429–453 (YMKNLDISRPDKKSKKQQDSTYPIK) the chain is Cytoplasmic. Residues 454 to 473 (NEVASGMILVMAFFLITYTF) form a helical membrane-spanning segment. Topologically, residues 474 to 705 (HSTWVTSEAY…DLDNRGLSRT (232 aa)) are lumenal. Positions 525–527 (WWD) are interacts with target acceptor peptide in protein substrate. The WWDYG motif motif lies at 525–529 (WWDYG). Tyrosine 530 serves as a coordination point for dolichyl diphosphooligosaccharide. N-linked (GlcNAc...) asparagine glycosylation is found at asparagine 537 and asparagine 544. The N-linked (GlcNAc...) (high mannose) asparagine glycan is linked to asparagine 548. A DK motif motif is present at residues 592–599 (DINKFLWM).

Belongs to the STT3 family. In terms of assembly, component of the oligosaccharyltransferase (OST) complex. There are 2 OST complexes, OST-A and OST-B, which contain STT3A or STT3B as catalytic subunit, respectively. OST-A and OST-B contain common core subunits RPN1, RPN2, OST48, OST4, DAD1 and TMEM258, and OST-A contains DC2/OSTC and KRTCAP2/KCP2 specific accessory subunits. OST-A complex assembly occurs through the formation of 3 subcomplexes. Subcomplex 1 contains RPN1 and TMEM258, subcomplex 2 contains the OST-A-specific subunits STT3A, DC2/OSTC, and KCP2 as well as the core subunit OST4, and subcomplex 3 contains RPN2, DAD1, and OST48. The OST-A complex can form stable complexes with the Sec61 complex or with both the Sec61 and TRAP complexes. Mg(2+) serves as cofactor. Requires Mn(2+) as cofactor.

Its subcellular location is the endoplasmic reticulum membrane. It catalyses the reaction a di-trans,poly-cis-dolichyl diphosphooligosaccharide + L-asparaginyl-[protein] = N(4)-(oligosaccharide-(1-&gt;4)-N-acetyl-beta-D-glucosaminyl-(1-&gt;4)-N-acetyl-beta-D-glucosaminyl)-L-asparaginyl-[protein] + a di-trans,poly-cis-dolichyl diphosphate + H(+). It functions in the pathway protein modification; protein glycosylation. Functionally, catalytic subunit of the oligosaccharyl transferase (OST) complex that catalyzes the initial transfer of a defined glycan (Glc(3)Man(9)GlcNAc(2) in eukaryotes) from the lipid carrier dolichol-pyrophosphate to an asparagine residue within an Asn-X-Ser/Thr consensus motif in nascent polypeptide chains, the first step in protein N-glycosylation. N-glycosylation occurs cotranslationally and the complex associates with the Sec61 complex at the channel-forming translocon complex that mediates protein translocation across the endoplasmic reticulum (ER). All subunits are required for a maximal enzyme activity. This subunit contains the active site and the acceptor peptide and donor lipid-linked oligosaccharide (LLO) binding pockets. STT3A is present in the majority of OST complexes and mediates cotranslational N-glycosylation of most sites on target proteins, while STT3B-containing complexes are required for efficient post-translational glycosylation and mediate glycosylation of sites that have been skipped by STT3A. STT3A-containing OST-A complex is also required to prevent hyperglycosylation of some target proteins by preventing glycosylation of facultative sites before folding of target proteins is completed. The chain is Dolichyl-diphosphooligosaccharide--protein glycosyltransferase subunit STT3A from Canis lupus familiaris (Dog).